Consider the following 353-residue polypeptide: Ribosomal RNA small subunit methyltransferase (353 aa).

The segment covering 1-10 (MAGGKIRKEK) has biased composition (basic residues). The tract at residues 1 to 23 (MAGGKIRKEKPKASNRAPSNHYQ) is disordered. Histidine 35, leucine 37, glycine 62, glutamate 83, aspartate 111, and asparagine 126 together coordinate S-adenosyl-L-methionine. The interval 270-313 (ALNTTSMDLGDQSMGMEDDDNEMDDDDMEMDEGEGDGGETSEFK) is disordered. Acidic residues predominate over residues 285 to 308 (MEDDDNEMDDDDMEMDEGEGDGGE).

This sequence belongs to the class I-like SAM-binding methyltransferase superfamily. rRNA adenine N(6)-methyltransferase family. As to expression, expressed in rapidly dividing tissues, including root meristems and lateral root primordia, developing cotyledons and leaves, petals, anther, pollen grains and silique abscission zone.

Its subcellular location is the nucleus. It is found in the nucleolus. It catalyses the reaction adenosine(1785)/adenosine(1786) in 18S rRNA + 4 S-adenosyl-L-methionine = N(6)-dimethyladenosine(1785)/N(6)-dimethyladenosine(1786) in 18S rRNA + 4 S-adenosyl-L-homocysteine + 4 H(+). In terms of biological role, N6-adenine methyltransferase which modifies the AA dinucleotide at the plant nuclear 18S rRNA nucleotides A1785 and A1786. Required for generating appropriate patterns of gene expression during root development, including the cell-specific expression of transcriptional regulators involved in root hair and non-hair cells patterning. This Arabidopsis thaliana (Mouse-ear cress) protein is Ribosomal RNA small subunit methyltransferase.